The sequence spans 1057 residues: MELWVPQTQGRTTGPSRDANRRLQSGHYRPRPHPQYSGDNYHQWQDTHKNSKPQQDPRDDHQQPHYVPRSGEWSQPVSGADYLKGSYPSHPYSRSGYEDPYQSYHTPTPRDEYAYGNYYYHGHPQLPQGERVARQGSPYIWHEDHRDQRHFSEHHWEKHNSTFEANSDTQFQFTSKNPYNDNPASAFGLEQPGEFFPESGAQKQKPSLTSKSNLLQQHESGLSSSSYELSQYMTEAPEQYEPMVSATWRPIQADDTSATVPKAPMRFYVPHVSVSFGPGGQLICVSPNSPADGQTALVEVHSMEVILNDFEDQEEMRAFPGPLIREDIHKVDIMTFCQKKAAQCLKSETPGSRDSALLWQLLVLLCRQNGSMVGSDIAELLMQDCKKLEKYKRQPPVANLINLTDEDWPVLSSGTRNLLTGEIPLNVDTPAQIVEKFTNLLYYGRKKEALEWAMKNHLWGHALFLASKMDPRTYNWVMSGFTTTLALNDPLQTLFQLMSGRIPQAATCCGDKQWGDWRPHLAVILSNQAGDAELYQRAIVSMGDTLAGKGLVEASHFCYLMAHVPFGHYTVKTDHLALVGSNHSQEFLKFATIEAIQRTEIFEYCQMLGRPKSFIPSFQVYKLLYASRLADYGLASQALHYCEAIGAAVLSEGGSSHPVLLAELIKLAEKLKLSDPLVLESRRGDRVLEPDWLVQLRRKHKELEQTRTGDLRDPDLTPSDIYGARGTTDTPYRDLYGQQNYSEDSEYSSALWPTSEQTSLTNPTPQQPFPLQRDTYSERDGPVHMGTPVPLYSVPATHLTVISGSSSGSGVAVTGAPGGRVGEEMLQKHPALGENTVPQEAVQDPDGLAVISSPQTPLAPRDRSFSEDSAISAKEDEEGTSDGADKPPHPDASQKEKLRDGKNTKSSGFGWFSWFRSKPASSVSTSGDEDSVDSSDSEESPRASPPHHASLGLSPTPPLSSPSLPGASTFPRGTGGNSLQGSSNSSGMAEGVGIGGFSGPQGVSSEFYSQPGALPPPPTLQGAVPLYNPSQVPQLPTASSLNRPNRLAQRRYPSQPC.

The span at 1-15 (MELWVPQTQGRTTGP) shows a compositional bias: polar residues. The interval 1 to 86 (MELWVPQTQG…VSGADYLKGS (86 aa)) is disordered. A compositionally biased stretch (basic and acidic residues) spans 45-63 (QDTHKNSKPQQDPRDDHQQ). Serine 70, serine 137, serine 161, and serine 185 each carry phosphoserine. A disordered region spans residues 185–220 (SAFGLEQPGEFFPESGAQKQKPSLTSKSNLLQQHES). Residues 201 to 213 (AQKQKPSLTSKSN) show a composition bias toward polar residues. At serine 245 the chain carries Phosphoserine. The tract at residues 263-708 (APMRFYVPHV…KHKELEQTRT (446 aa)) is central conserved domain (CCD); required for localization to endoplasmic reticulum exit sites. Positions 704 to 715 (EQTRTGDLRDPD) are enriched in basic and acidic residues. Disordered regions lie at residues 704-778 (EQTR…TYSE) and 849-1057 (AVIS…SQPC). Polar residues predominate over residues 737 to 764 (GQQNYSEDSEYSSALWPTSEQTSLTNPT). Position 856 is a phosphothreonine (threonine 856). Serine 866, serine 869, serine 872, and serine 881 each carry phosphoserine. A compositionally biased stretch (basic and acidic residues) spans 883–903 (GADKPPHPDASQKEKLRDGKN). Low complexity predominate over residues 906 to 926 (SSGFGWFSWFRSKPASSVSTS). The span at 927–938 (GDEDSVDSSDSE) shows a compositional bias: acidic residues. A compositionally biased stretch (gly residues) spans 990–999 (EGVGIGGFSG). The segment covering 1028 to 1043 (NPSQVPQLPTASSLNR) has biased composition (polar residues).

Belongs to the SEC16 family. In terms of assembly, SEC16A and SEC16B are each present in multiple copies in a heteromeric complex. Interacts with TFG. Interacts with SEC13. Liver, kidney, heart, spleen and brain.

The protein resides in the endoplasmic reticulum membrane. The protein localises to the golgi apparatus membrane. Plays a role in the organization of the endoplasmic reticulum exit sites (ERES), also known as transitional endoplasmic reticulum (tER). Required for secretory cargo traffic from the endoplasmic reticulum to the Golgi apparatus. Involved in peroxisome biogenesis. Regulates the transport of peroxisomal biogenesis factors PEX3 and PEX16 from the ER to peroxisomes. This is Protein transport protein Sec16B (Sec16b) from Rattus norvegicus (Rat).